The primary structure comprises 358 residues: uncharacterized protein (358 aa).

29 to 36 (GPINSGKT) contributes to the ATP binding site.

It belongs to the archaeal ATPase family.

This is an uncharacterized protein from Methanocaldococcus jannaschii (strain ATCC 43067 / DSM 2661 / JAL-1 / JCM 10045 / NBRC 100440) (Methanococcus jannaschii).